The sequence spans 688 residues: MIDRYKHQQLRIGPVSPQQISAWANKILPNGEIVGEVTKPYTFHYKTNKPEKDGLFCERISGPIKSGICACGNYRVIGDEKEDPNFCEQCGVEFADSRARRYQMGYIKLTCPVTHVWYLKRLPSYIANLLDKPLKELEGLVYCDFSFARPVAKKPTFLRLRGLFEYEIQSRKYSIPLFFTTQGFDTFRNREISTGASAIREQLADLDLRIIIDRSLVEWKELGEEGSTGNEWEDRKIGRRKDFLVRRIELAKHFIRTNVEPERMVLSLLPVLPPELRPIIQIDGGKPMSSDINELYRRVIYRNNTLTDLLTTSRSTPGELVMCQEKLVQEAVDTLLDNGIRGQPMRDGYNKVYKSFSDVIEGKEGRFRETLLGKRVDYSGRSVIVVGPSLSLHRCGLPREIAIELFQTFLIRGLIRQRVASNIGIAKSKIREKEPIVWEILQEIMRGHPVLLNRAPTLHRLGIQAFQPILVEGRAICLHPLVCKGFNADFDGDQMAVHVPLSLEAQAEARLLMFSHMNLLSPAIGSPISVPTQDMLIGLYVLTIGNRQGVCANRYNPWNRRNYQNETVDHTKYDRTNYRYTKEKEPYFCSSYDALGAYRQKRIHLDTPLWLRWRLDQRIISLREVPIEVQYESLGTYHEIYRPYLIVKSVKKEILCIYIRTTVGHISFYREIEEAIQGFCRAYSYDGT.

Zn(2+) is bound by residues cysteine 69, cysteine 71, cysteine 87, and cysteine 90. Residues aspartate 489, aspartate 491, and aspartate 493 each coordinate Mg(2+).

The protein belongs to the RNA polymerase beta' chain family. RpoC1 subfamily. As to quaternary structure, in plastids the minimal PEP RNA polymerase catalytic core is composed of four subunits: alpha, beta, beta', and beta''. When a (nuclear-encoded) sigma factor is associated with the core the holoenzyme is formed, which can initiate transcription. Mg(2+) serves as cofactor. Requires Zn(2+) as cofactor.

Its subcellular location is the plastid. The protein resides in the chloroplast. It catalyses the reaction RNA(n) + a ribonucleoside 5'-triphosphate = RNA(n+1) + diphosphate. In terms of biological role, DNA-dependent RNA polymerase catalyzes the transcription of DNA into RNA using the four ribonucleoside triphosphates as substrates. This Piper cenocladum (Ant piper) protein is DNA-directed RNA polymerase subunit beta'.